A 282-amino-acid chain; its full sequence is Undecaprenyl-diphosphatase 1 (282 aa).

8 helical membrane-spanning segments follow: residues 1-21 (MLLL…VLPL), 46-66 (GVAL…LYFW), 91-111 (AFLV…LAHF), 117-137 (SPGL…LGVI), 150-170 (MGGI…LPGV), 193-213 (FSML…GLDL), 226-246 (LIAA…MMAW), and 260-280 (VLLG…APFL).

This sequence belongs to the UppP family.

The protein resides in the cell inner membrane. The catalysed reaction is di-trans,octa-cis-undecaprenyl diphosphate + H2O = di-trans,octa-cis-undecaprenyl phosphate + phosphate + H(+). Catalyzes the dephosphorylation of undecaprenyl diphosphate (UPP). Confers resistance to bacitracin. This is Undecaprenyl-diphosphatase 1 from Rhodospirillum rubrum (strain ATCC 11170 / ATH 1.1.1 / DSM 467 / LMG 4362 / NCIMB 8255 / S1).